The primary structure comprises 173 residues: Disulfide bond formation protein B (173 aa).

At 1 to 14 (MIEFLRRIAAHRLA) the chain is on the cytoplasmic side. A helical transmembrane segment spans residues 15 to 31 (WGLLAASALFLELSALF). The Periplasmic segment spans residues 32 to 49 (FQYVLGLHPCVMCVYERL). An intrachain disulfide couples Cys41 to Cys44. Residues 50-65 (AILGVLSAGLLGMVAP) form a helical membrane-spanning segment. Topologically, residues 66-72 (EKWYLRW) are cytoplasmic. The chain crosses the membrane as a helical span at residues 73–90 (SALLLWGYSAFRGLQLAL). The Periplasmic segment spans residues 91–145 (KHVDYQMNPSPFNVCSPFADFPSWAPLDQWLPWLFFPDGDCSEISWQFLSFSMPQ). Cys105 and Cys131 form a disulfide bridge. Residues 146–164 (WLVAIFAAYLLVFVVVTIG) traverse the membrane as a helical segment. The Cytoplasmic portion of the chain corresponds to 165 to 173 (NLVKGRCCS).

Belongs to the DsbB family.

It is found in the cell inner membrane. Its function is as follows. Required for disulfide bond formation in some periplasmic proteins. Acts by oxidizing the DsbA protein. This chain is Disulfide bond formation protein B, found in Aeromonas salmonicida (strain A449).